Here is a 261-residue protein sequence, read N- to C-terminus: Claudin-18 (261 aa).

Over 1–6 (MSTTTC) the chain is Cytoplasmic. A helical membrane pass occupies residues 7 to 27 (QVVAFLLSILGLAGCIAATGM). The Extracellular portion of the chain corresponds to 28-80 (DMWSTQDLYDNPVTSVFQYEGLWRSCVRQSSGFTECRPYFTILGLPAMLQAVR). A helical transmembrane segment spans residues 81-101 (ALMIVGIVLGAIGLLVSIFAL). The Cytoplasmic portion of the chain corresponds to 102–122 (KCIRIGSMEDSAKANMTLTSG). A helical transmembrane segment spans residues 123–143 (IMFIVSGLCAIAGVSVFANML). Topologically, residues 144–174 (VTNFWMSTANMYTGMGGMVQTVQTRYTFGAA) are extracellular. Residues 175–195 (LFVGWVAGGLTLIGGVMMCIA) form a helical membrane-spanning segment. A required for role in regulation of RANKL-induced osteoclast differentiation region spans residues 195-261 (ACRGLAPEET…QSYPSKHDYV (67 aa)). Over 196-261 (CRGLAPEETN…QSYPSKHDYV (66 aa)) the chain is Cytoplasmic. Phosphoserine is present on S214. The segment at 242–261 (DGGARTEDEVQSYPSKHDYV) is disordered.

Belongs to the claudin family. In terms of assembly, interacts with TJP2/ZO-2. Interacts with TJP1/ZO-1. Interacts with YAP1 (phosphorylated); the interaction sequesters YAP1 away from the nucleus and thereby restricts transcription of YAP1 target genes. Interacts with CLDN19. Expression is restricted to the lung. As to expression, expression is restricted to the stomach mucosa where it is predominantly observed in the epithelial cells of the pit region and the base of the gastric glands including exocrine and endocrine cells (at protein level).

The protein localises to the cell junction. It is found in the tight junction. Its subcellular location is the cell membrane. The protein resides in the lateral cell membrane. Functionally, involved in alveolar fluid homeostasis via regulation of alveolar epithelial tight junction composition and therefore ion transport and solute permeability, potentially via downstream regulation of the actin cytoskeleton organization and beta-2-adrenergic signaling. Required for lung alveolarization and maintenance of the paracellular alveolar epithelial barrier. Acts to maintain epithelial progenitor cell proliferation and organ size, via regulation of YAP1 localization away from the nucleus and thereby restriction of YAP1 target gene transcription. Acts as a negative regulator of RANKL-induced osteoclast differentiation, potentially via relocation of TJP2/ZO-2 away from the nucleus, subsequently involved in bone resorption in response to calcium deficiency. Mediates the osteoprotective effects of estrogen, potentially via acting downstream of estrogen signaling independently of RANKL signaling pathways. Its function is as follows. Involved in the maintenance of homeostasis of the alveolar microenvironment via regulation of pH and subsequent T-cell activation in the alveolar space, is therefore indirectly involved in limiting C.neoformans infection. Required for the formation of the gastric paracellular barrier via its role in tight junction formation, thereby involved in the response to gastric acidification. This Homo sapiens (Human) protein is Claudin-18 (CLDN18).